Reading from the N-terminus, the 513-residue chain is Mesoderm induction early response protein 1 (513 aa).

Positions 1-16 (MAEPSVESSSPGGSAT) are enriched in low complexity. The disordered stretch occupies residues 1–174 (MAEPSVESSS…EEESEEDEDY (174 aa)). 2 stretches are compositionally biased toward basic and acidic residues: residues 17–36 (SDDH…FDDE) and 46–63 (EGER…RESD). Over residues 82-107 (QEDDDDEDEEEEEEEGEDDDDVDNDD) the composition is skewed to acidic residues. Positions 131 to 146 (QSSNDDPAPSVASQDP) are enriched in polar residues. Positions 157 to 261 (YFDTNSEIEE…IKDNEQALYE (105 aa)) are interaction with HDAC1. Over residues 162-174 (SEIEEESEEDEDY) the composition is skewed to acidic residues. The ELM2 domain maps to 182–280 (KEIMVGSMFQ…ESLRRLRFNV (99 aa)). Residues 285–337 (EELSVWTEEECRNFEQGLKVYGKDFHVIQANKVRTRSVGECVAFYYMWKKSER) form the SANT domain. Residues 368-513 (ESESAASSRA…KLEELETLDD (146 aa)) form a disordered region. Composition is skewed to basic and acidic residues over residues 416–425 (PSKDEAKPEG) and 463–476 (SRSE…NERP). Residues 483-500 (NSNGKESPGSSEFFQEAN) are compositionally biased toward polar residues.

Its subcellular location is the nucleus. Transcriptional repressor regulating the expression of a number of genes. Probably functions through recruitment of histone deacetylases involved in chromatin silencing. The sequence is that of Mesoderm induction early response protein 1 (MIER1) from Gallus gallus (Chicken).